Consider the following 109-residue polypeptide: Nucleoid-associated protein Sbal223_1770 (109 aa).

This sequence belongs to the YbaB/EbfC family. In terms of assembly, homodimer.

It localises to the cytoplasm. The protein localises to the nucleoid. In terms of biological role, binds to DNA and alters its conformation. May be involved in regulation of gene expression, nucleoid organization and DNA protection. This chain is Nucleoid-associated protein Sbal223_1770, found in Shewanella baltica (strain OS223).